The chain runs to 284 residues: Bifunctional protein FolD 2 (284 aa).

NADP(+) is bound by residues 164–166 (GRG), S189, and I230.

The protein belongs to the tetrahydrofolate dehydrogenase/cyclohydrolase family. Homodimer.

It carries out the reaction (6R)-5,10-methylene-5,6,7,8-tetrahydrofolate + NADP(+) = (6R)-5,10-methenyltetrahydrofolate + NADPH. The catalysed reaction is (6R)-5,10-methenyltetrahydrofolate + H2O = (6R)-10-formyltetrahydrofolate + H(+). The protein operates within one-carbon metabolism; tetrahydrofolate interconversion. In terms of biological role, catalyzes the oxidation of 5,10-methylenetetrahydrofolate to 5,10-methenyltetrahydrofolate and then the hydrolysis of 5,10-methenyltetrahydrofolate to 10-formyltetrahydrofolate. This chain is Bifunctional protein FolD 2, found in Desulfitobacterium hafniense (strain Y51).